Consider the following 342-residue polypeptide: Holliday junction branch migration complex subunit RuvB (342 aa).

A large ATPase domain (RuvB-L) region spans residues 1 to 181; that stretch reads MEERFLTPKD…FGMVLELEFY (181 aa). ATP contacts are provided by residues L20, R21, G62, K65, T66, T67, 128-130, R171, Y181, and R218; that span reads EDF. Position 66 (T66) interacts with Mg(2+). The small ATPAse domain (RuvB-S) stretch occupies residues 182-252; that stretch reads TPDELKQIIK…TVEDAMKIMG (71 aa). A head domain (RuvB-H) region spans residues 255 to 342; that stretch reads AEGLDDMDRK…IGPLWDSTGD (88 aa). Positions 310 and 315 each coordinate DNA.

The protein belongs to the RuvB family. Homohexamer. Forms an RuvA(8)-RuvB(12)-Holliday junction (HJ) complex. HJ DNA is sandwiched between 2 RuvA tetramers; dsDNA enters through RuvA and exits via RuvB. An RuvB hexamer assembles on each DNA strand where it exits the tetramer. Each RuvB hexamer is contacted by two RuvA subunits (via domain III) on 2 adjacent RuvB subunits; this complex drives branch migration. In the full resolvosome a probable DNA-RuvA(4)-RuvB(12)-RuvC(2) complex forms which resolves the HJ.

It is found in the cytoplasm. The enzyme catalyses ATP + H2O = ADP + phosphate + H(+). Functionally, the RuvA-RuvB-RuvC complex processes Holliday junction (HJ) DNA during genetic recombination and DNA repair, while the RuvA-RuvB complex plays an important role in the rescue of blocked DNA replication forks via replication fork reversal (RFR). RuvA specifically binds to HJ cruciform DNA, conferring on it an open structure. The RuvB hexamer acts as an ATP-dependent pump, pulling dsDNA into and through the RuvAB complex. RuvB forms 2 homohexamers on either side of HJ DNA bound by 1 or 2 RuvA tetramers; 4 subunits per hexamer contact DNA at a time. Coordinated motions by a converter formed by DNA-disengaged RuvB subunits stimulates ATP hydrolysis and nucleotide exchange. Immobilization of the converter enables RuvB to convert the ATP-contained energy into a lever motion, pulling 2 nucleotides of DNA out of the RuvA tetramer per ATP hydrolyzed, thus driving DNA branch migration. The RuvB motors rotate together with the DNA substrate, which together with the progressing nucleotide cycle form the mechanistic basis for DNA recombination by continuous HJ branch migration. Branch migration allows RuvC to scan DNA until it finds its consensus sequence, where it cleaves and resolves cruciform DNA. This is Holliday junction branch migration complex subunit RuvB from Kosmotoga olearia (strain ATCC BAA-1733 / DSM 21960 / TBF 19.5.1).